The sequence spans 294 residues: 33 kDa chaperonin (294 aa).

Cystine bridges form between C235/C237 and C268/C271.

Belongs to the HSP33 family. Under oxidizing conditions two disulfide bonds are formed involving the reactive cysteines. Under reducing conditions zinc is bound to the reactive cysteines and the protein is inactive.

It is found in the cytoplasm. In terms of biological role, redox regulated molecular chaperone. Protects both thermally unfolding and oxidatively damaged proteins from irreversible aggregation. Plays an important role in the bacterial defense system toward oxidative stress. This is 33 kDa chaperonin from Proteus mirabilis (strain HI4320).